Reading from the N-terminus, the 452-residue chain is Ribosomal protein uS12 methylthiotransferase RimO (452 aa).

The MTTase N-terminal domain occupies 8–123; it reads PRVGFVSLGC…VMQAVHTHLP (116 aa). [4Fe-4S] cluster is bound by residues Cys-17, Cys-53, Cys-82, Cys-154, Cys-158, and Cys-161. The region spanning 140-381 is the Radical SAM core domain; that stretch reads LTPKHYAYLK…MEVAEEVSAR (242 aa). Residues 384-452 form the TRAM domain; sequence QRKVGQTLRV…ADGHDLWGEI (69 aa).

This sequence belongs to the methylthiotransferase family. RimO subfamily. [4Fe-4S] cluster serves as cofactor.

The protein resides in the cytoplasm. The catalysed reaction is L-aspartate(89)-[ribosomal protein uS12]-hydrogen + (sulfur carrier)-SH + AH2 + 2 S-adenosyl-L-methionine = 3-methylsulfanyl-L-aspartate(89)-[ribosomal protein uS12]-hydrogen + (sulfur carrier)-H + 5'-deoxyadenosine + L-methionine + A + S-adenosyl-L-homocysteine + 2 H(+). In terms of biological role, catalyzes the methylthiolation of an aspartic acid residue of ribosomal protein uS12. The polypeptide is Ribosomal protein uS12 methylthiotransferase RimO (Cupriavidus pinatubonensis (strain JMP 134 / LMG 1197) (Cupriavidus necator (strain JMP 134))).